The following is a 226-amino-acid chain: Movement and silencing protein TGBp1 (226 aa).

The (+)RNA virus helicase ATP-binding domain maps to 1–115; it reads MDILIISLKS…EFSLEPHFYL (115 aa). The region spanning 116–226 is the (+)RNA virus helicase C-terminal domain; sequence ETSFRVPRKV…KGLTYVRAGT (111 aa).

This sequence belongs to the Tymovirales TGBp1 protein family. In terms of assembly, homodimer and homooligomer. Interacts with capsid protein. Interacts with host AGO1; this interaction targets the host protein for degradation, thereby suppressing the antiviral RNA silencing.

The protein resides in the host cytoplasm. Functionally, transports viral genome to neighboring plant cells directly through plasmosdesmata, without any budding. The movement protein allows efficient cell to cell propagation, by bypassing the host cell wall barrier. Increases plasmodesma size exclusion limit. Acts as a suppressor of RNA-mediated gene silencing, also known as post-transcriptional gene silencing (PTGS), a mechanism of plant viral defense that limits the accumulation of viral RNAs. This chain is Movement and silencing protein TGBp1, found in Brassica campestris (Field mustard).